The sequence spans 581 residues: Pyridine nucleotide-disulfide oxidoreductase domain-containing protein 2 (581 aa).

38–71 (VVIGAGHNGLVAAAYLQRLGVNTAVFERRHVIGG) is a binding site for FAD.

It belongs to the carotenoid/retinoid oxidoreductase family. In terms of assembly, interacts with COX5B; this interaction may contribute to localize PYROXD2 to the inner face of the inner mitochondrial membrane.

The protein localises to the mitochondrion matrix. In terms of biological role, probable oxidoreductase that may play a role as regulator of mitochondrial function. The chain is Pyridine nucleotide-disulfide oxidoreductase domain-containing protein 2 from Homo sapiens (Human).